Reading from the N-terminus, the 590-residue chain is MSSISINIAMPLNSLHNFERKPSKAWSTSCTAPAARLRASSSLQQEKPHQIRRSGDYQPSLWDFNYIQSLNTPYKEQRHFNRQAELIMQVRMLLKVKMEAIQQLELIDDLQYLGLSYFFQDEIKQILSSIHNEPRYFHNNDLYFTALGFRILRQHGFNVSEDVFDCFKIEKCSDFNANLAQDTKGMLQLYEASFLLREGEDTLELARRFSTRSLREKFDEGGDEIDEDLSSWIRHSLDLPLHWRVQGLEARWFLDAYARRPDMNPLIFKLAKLNFNIVQATYQEELKDISRWWNSSCLAEKLPFVRDRIVECFFWAIAAFEPHQYSYQRKMAAVIITFITIIDDVYDVYGTIEELELLTDMIRRWDNKSISQLPYYMQVCYLALYNFVSERAYDILKDQHFNSIPYLQRSWVSLVEGYLKEAYWYYNGYKPSLEEYLNNAKISISAPTIISQLYFTLANSIDETAIESLYQYHNILYLSGTILRLADDLGTSQHELERGDVPKAIQCYMNDTNASEREAVEHVKFLIREAWKEMNTVTTASDCPFTDDLVAAAANLARAAQFIYLDGDGHGVQHSEIHQQMGGLLFQPYV.

A chloroplast-targeting transit peptide spans 1-51; that stretch reads MSSISINIAMPLNSLHNFERKPSKAWSTSCTAPAARLRASSSLQQEKPHQI. Asp343, Asp347, Asp487, Thr491, and Glu495 together coordinate Mg(2+). Positions 343–347 match the DDXXD motif motif; it reads DDVYD.

It belongs to the terpene synthase family. Monomer. It depends on Mg(2+) as a cofactor.

Its subcellular location is the plastid. It is found in the chloroplast. It catalyses the reaction (2E)-geranyl diphosphate = (1R,5R)-sabinene + diphosphate. The protein operates within terpene metabolism; sabinene hydrate biosynthesis. Catalyzes the formation of the (-)-3-isothujone precursor sabinene from geranyl diphosphate. The enzyme also produces significant amounts of gamma-terpinene, terpinolene and limonene. The protein is (+)-sabinene synthase, chloroplastic of Salvia officinalis (Sage).